The primary structure comprises 289 residues: ATP synthase gamma chain (289 aa).

Belongs to the ATPase gamma chain family. As to quaternary structure, F-type ATPases have 2 components, CF(1) - the catalytic core - and CF(0) - the membrane proton channel. CF(1) has five subunits: alpha(3), beta(3), gamma(1), delta(1), epsilon(1). CF(0) has three main subunits: a, b and c.

It is found in the cell inner membrane. Produces ATP from ADP in the presence of a proton gradient across the membrane. The gamma chain is believed to be important in regulating ATPase activity and the flow of protons through the CF(0) complex. The chain is ATP synthase gamma chain from Acinetobacter baumannii (strain AB307-0294).